The sequence spans 119 residues: Flagellar transcriptional regulator FlhD (119 aa).

This sequence belongs to the FlhD family. In terms of assembly, homodimer; disulfide-linked. Forms a heterohexamer composed of two FlhC and four FlhD subunits. Each FlhC binds a FlhD dimer, forming a heterotrimer, and a hexamer assembles by dimerization of two heterotrimers.

The protein localises to the cytoplasm. Functions in complex with FlhC as a master transcriptional regulator that regulates transcription of several flagellar and non-flagellar operons by binding to their promoter region. Activates expression of class 2 flagellar genes, including fliA, which is a flagellum-specific sigma factor that turns on the class 3 genes. Also regulates genes whose products function in a variety of physiological pathways. The protein is Flagellar transcriptional regulator FlhD of Serratia marcescens.